The sequence spans 222 residues: Putative adhesin RP828 (222 aa).

The first 22 residues, 1-22, serve as a signal peptide directing secretion; sequence MKKLLLIATASATILSSSVSFA.

Its function is as follows. Adheres to biotinylated epithelial (Vero cell) proteins. The sequence is that of Putative adhesin RP828 from Rickettsia prowazekii (strain Madrid E).